We begin with the raw amino-acid sequence, 214 residues long: MTAIYILTMISKEFQKIWEGNQKVKIPKSKDPLKYRLVQAQYRVRSMVSRLDVYIGRMQERDKVLFERVVESQMSKDQSRAAMYANELAEIRKITKQLLTTQIALEQVSLRLETVTELGDIFANLIPVMGVINELKTSLKGVMPELSIELGELGEGLQEIVIEAGEFSGVSGISATYSPEARQILEEASVVAEQRMKEKFPSLPAAGITQQQKS.

In terms of biological role, part of a cell division machinery. The protein is Cell division protein B1 of Sulfolobus acidocaldarius (strain ATCC 33909 / DSM 639 / JCM 8929 / NBRC 15157 / NCIMB 11770).